The following is a 193-amino-acid chain: Flagellar transcriptional regulator FlhC (193 aa).

Residues C138, C141, C158, and C161 each coordinate Zn(2+).

It belongs to the FlhC family. In terms of assembly, heterohexamer composed of two FlhC and four FlhD subunits. Each FlhC binds a FlhD dimer, forming a heterotrimer, and a hexamer assembles by dimerization of two heterotrimers. The cofactor is Zn(2+).

The protein localises to the cytoplasm. In terms of biological role, functions in complex with FlhD as a master transcriptional regulator that regulates transcription of several flagellar and non-flagellar operons by binding to their promoter region. Activates expression of class 2 flagellar genes, including fliA, which is a flagellum-specific sigma factor that turns on the class 3 genes. Also regulates genes whose products function in a variety of physiological pathways. The chain is Flagellar transcriptional regulator FlhC from Proteus mirabilis.